Here is a 338-residue protein sequence, read N- to C-terminus: Phenylalanine--tRNA ligase alpha subunit (338 aa).

A Mg(2+)-binding site is contributed by E252.

This sequence belongs to the class-II aminoacyl-tRNA synthetase family. Phe-tRNA synthetase alpha subunit type 1 subfamily. In terms of assembly, tetramer of two alpha and two beta subunits. Requires Mg(2+) as cofactor.

It localises to the cytoplasm. The enzyme catalyses tRNA(Phe) + L-phenylalanine + ATP = L-phenylalanyl-tRNA(Phe) + AMP + diphosphate + H(+). The chain is Phenylalanine--tRNA ligase alpha subunit from Ectopseudomonas mendocina (strain ymp) (Pseudomonas mendocina).